A 159-amino-acid polypeptide reads, in one-letter code: Urease subunit beta 2 (159 aa).

Residues 1-23 (MAKEPTEAAHPQPEQTKTNHKAH) form a disordered region.

It belongs to the urease beta subunit family. Heterotrimer of UreA (gamma), UreB (beta) and UreC (alpha) subunits. Three heterotrimers associate to form the active enzyme.

The protein resides in the cytoplasm. It carries out the reaction urea + 2 H2O + H(+) = hydrogencarbonate + 2 NH4(+). The protein operates within nitrogen metabolism; urea degradation; CO(2) and NH(3) from urea (urease route): step 1/1. The polypeptide is Urease subunit beta 2 (Brucella abortus biovar 1 (strain 9-941)).